Consider the following 61-residue polypeptide: Inner membrane protein p12 (61 aa).

The helical transmembrane segment at 16-36 (LLIVAIIVVIMAIMLYYFWWM) threads the bilayer.

Belongs to the asfivirus inner membrane protein p12 family. In terms of assembly, homomultimer; disulfide-linked. Post-translationally, not glycosylated.

The protein localises to the virion membrane. The sequence is that of Inner membrane protein p12 from Ornithodoros (relapsing fever ticks).